We begin with the raw amino-acid sequence, 371 residues long: Histidinol-phosphate aminotransferase (371 aa).

Lysine 228 is modified (N6-(pyridoxal phosphate)lysine).

It belongs to the class-II pyridoxal-phosphate-dependent aminotransferase family. Histidinol-phosphate aminotransferase subfamily. Pyridoxal 5'-phosphate is required as a cofactor.

It catalyses the reaction L-histidinol phosphate + 2-oxoglutarate = 3-(imidazol-4-yl)-2-oxopropyl phosphate + L-glutamate. Its pathway is amino-acid biosynthesis; L-histidine biosynthesis; L-histidine from 5-phospho-alpha-D-ribose 1-diphosphate: step 7/9. This is Histidinol-phosphate aminotransferase from Methanococcus maripaludis (strain C6 / ATCC BAA-1332).